The following is a 247-amino-acid chain: MAGHSKWKTIKRAKAATDNKRGALFTRLIREITMAAKLGGGDAGGNPRLRTAIDNAKAVSMPKDNIDRAIKKGTGELEGVDYVEVLYEAYGPGGVAIMIAAVTDNPTRTVADVRHKLSRNHGNMGTINSVAFMFDRKGQMSVAAEGVAEEALMEAALEAGADDVVNDGESFVISTDPGALHATKEGLEGRKYKVENAELAWVPKNTVKVEGENATQLLKLLEALEELDDVQKVDANFEMDDDTMADA.

It belongs to the TACO1 family.

It is found in the cytoplasm. The sequence is that of Probable transcriptional regulatory protein GAU_0635 from Gemmatimonas aurantiaca (strain DSM 14586 / JCM 11422 / NBRC 100505 / T-27).